Consider the following 894-residue polypeptide: Alanine--tRNA ligase (894 aa).

Zn(2+) is bound by residues H587, H591, C691, and H695. Residues 739–758 form a disordered region; that stretch reads AEGDRAAEEAKGRLQEERDA.

The protein belongs to the class-II aminoacyl-tRNA synthetase family. Zn(2+) serves as cofactor.

The protein resides in the cytoplasm. It carries out the reaction tRNA(Ala) + L-alanine + ATP = L-alanyl-tRNA(Ala) + AMP + diphosphate. Its function is as follows. Catalyzes the attachment of alanine to tRNA(Ala) in a two-step reaction: alanine is first activated by ATP to form Ala-AMP and then transferred to the acceptor end of tRNA(Ala). Also edits incorrectly charged Ser-tRNA(Ala) and Gly-tRNA(Ala) via its editing domain. This chain is Alanine--tRNA ligase, found in Cenarchaeum symbiosum (strain A).